Here is a 616-residue protein sequence, read N- to C-terminus: MKLVLLLAGFAALAKCSLAAPAGVQKDIPMETSAPEKPSEATTLGLLKTPKPEPKDEEPSPGAFQGDMMLTDDQLRKVEEAIDDQKAGRKKRKATIYESQRWSYKIIPYVIESSSSGQSSLIRSAMDHWEQNTCLRFEPLTSSHSSRLGHTSYISFFRGNGCWSHVGRSFTNQQQISIGPQCGYFGTIVHEIGHAIGFHHEQSRPDRDEYINVHFENVQSGREHNFAKYTWGSVTSSNVEYDVGSIMHYGGYGFSSNGRPTITTIDPRLNSRLGQRTALSAADIELANRIYECDDVEDCSNADECLNGGYHDADCDCVCPSSYSGDLCQDGGPTVRPADCSYRFTEMTGEITSPNYPSNYEDNTACVYEIEGPYGSTIELTFLDMEIETETLCRYDAVEVRKDDINSIGEKFCGNTLPPVQISSSNQMMVSFTSDPSITRRGFKATYVIIIQTTTVFSTTTLQTTPPSTTTLQTTNPSTTTLQTTNPSTTTLQTTDTPVIGSCGGTFVGVEGRVASPNYPNDYDNSLQCDYVIEVDDGRRVELIFEDFGLEDETTCRWDSLMINLGNGIKVGMKMCGREYPAASLVSIGNRMELKLKTDGSVNDRGFVASYRAIDL.

The signal sequence occupies residues 1–16; sequence MKLVLLLAGFAALAKC. A propeptide spans 17-93 (activation peptide); sequence SLAAPAGVQK…DQKAGRKKRK (77 aa). Positions 30-67 are disordered; it reads METSAPEKPSEATTLGLLKTPKPEPKDEEPSPGAFQGD. The 202-residue stretch at 93–294 folds into the Peptidase M12A domain; the sequence is KATIYESQRW…ELANRIYECD (202 aa). Intrachain disulfides connect Cys134-Cys293, Cys162-Cys182, Cys299-Cys317, Cys319-Cys328, Cys340-Cys366, and Cys393-Cys413. His190 provides a ligand contact to Zn(2+). Residue Glu191 is part of the active site. Zn(2+) contacts are provided by His194 and His200. The EGF-like domain maps to 289 to 329; that stretch reads RIYECDDVEDCSNADECLNGGYHDADCDCVCPSSYSGDLCQ. The CUB 1 domain maps to 340–450; it reads CSYRFTEMTG…RGFKATYVII (111 aa). A disordered region spans residues 461–491; the sequence is TLQTTPPSTTTLQTTNPSTTTLQTTNPSTTT. 2 cysteine pairs are disulfide-bonded: Cys503–Cys529 and Cys556–Cys576. The CUB 2 domain maps to 503–614; that stretch reads CGGTFVGVEG…RGFVASYRAI (112 aa).

Zn(2+) is required as a cofactor. In terms of tissue distribution, asymmetrically along the animal-vegetal axis of the blastula.

The chain is Protein SpAN (SPAN) from Strongylocentrotus purpuratus (Purple sea urchin).